A 245-amino-acid polypeptide reads, in one-letter code: 5-oxoprolinase subunit A (245 aa).

It belongs to the LamB/PxpA family. As to quaternary structure, forms a complex composed of PxpA, PxpB and PxpC.

The enzyme catalyses 5-oxo-L-proline + ATP + 2 H2O = L-glutamate + ADP + phosphate + H(+). In terms of biological role, catalyzes the cleavage of 5-oxoproline to form L-glutamate coupled to the hydrolysis of ATP to ADP and inorganic phosphate. In Yersinia pseudotuberculosis serotype O:1b (strain IP 31758), this protein is 5-oxoprolinase subunit A.